A 126-amino-acid chain; its full sequence is Fluoride-specific ion channel FluC (126 aa).

The next 4 membrane-spanning stretches (helical) occupy residues 4-24, 35-55, 71-91, and 104-124; these read FMLL…RYLI, GFPY…GVLM, IIGL…MDNV, and LNIL…FQLM. Gly-78 and Thr-81 together coordinate Na(+).

Belongs to the fluoride channel Fluc/FEX (TC 1.A.43) family.

The protein resides in the cell inner membrane. It catalyses the reaction fluoride(in) = fluoride(out). Its activity is regulated as follows. Na(+) is not transported, but it plays an essential structural role and its presence is essential for fluoride channel function. In terms of biological role, fluoride-specific ion channel. Important for reducing fluoride concentration in the cell, thus reducing its toxicity. This chain is Fluoride-specific ion channel FluC, found in Aliivibrio salmonicida (strain LFI1238) (Vibrio salmonicida (strain LFI1238)).